The following is a 274-amino-acid chain: MPFRSNNPITRDELLSRFFPQYHPVTTFNSGLSGGSFLIEHQGQRFVVRQPHDPDAPQSAFLRQYRALSQLPACIAPKPHLYLRDWMVVDYLPGAVKTYLPDTNELAGLLYYLHQQPRFGWRITLLPLLELYWQQSDPARRTVGWLRMLKRLRKAREPRPLRLSPLHMDVHAGNLVHSASGLKLIDWEYAGDGDIALELAAVWVENTEQHRQLVNDYATRAKIYPAQLWRQVRRWFPWLLMLKAGWFEYRWRQTGDQQFIRLADDTWRQLLIKQ.

This sequence belongs to the thiamine kinase family.

It carries out the reaction thiamine + ATP = thiamine phosphate + ADP + H(+). The protein operates within cofactor biosynthesis; thiamine diphosphate biosynthesis; thiamine phosphate from thiamine: step 1/1. Functionally, catalyzes the ATP-dependent phosphorylation of thiamine to thiamine phosphate. Is involved in thiamine salvage. This is Thiamine kinase from Escherichia coli (strain K12 / MC4100 / BW2952).